A 282-amino-acid polypeptide reads, in one-letter code: Bifunctional protein FolD (282 aa).

Residues 166 to 168 and Ile-232 contribute to the NADP(+) site; that span reads GAS.

Belongs to the tetrahydrofolate dehydrogenase/cyclohydrolase family. As to quaternary structure, homodimer.

The enzyme catalyses (6R)-5,10-methylene-5,6,7,8-tetrahydrofolate + NADP(+) = (6R)-5,10-methenyltetrahydrofolate + NADPH. It catalyses the reaction (6R)-5,10-methenyltetrahydrofolate + H2O = (6R)-10-formyltetrahydrofolate + H(+). It participates in one-carbon metabolism; tetrahydrofolate interconversion. Functionally, catalyzes the oxidation of 5,10-methylenetetrahydrofolate to 5,10-methenyltetrahydrofolate and then the hydrolysis of 5,10-methenyltetrahydrofolate to 10-formyltetrahydrofolate. The sequence is that of Bifunctional protein FolD from Haemophilus influenzae (strain PittGG).